A 122-amino-acid polypeptide reads, in one-letter code: Small ribosomal subunit protein uS13 (122 aa).

Residues 95-122 form a disordered region; the sequence is GLPVRGQRTHTNARTRKGPAKSIAGKKK.

It belongs to the universal ribosomal protein uS13 family. As to quaternary structure, part of the 30S ribosomal subunit. Forms a loose heterodimer with protein S19. Forms two bridges to the 50S subunit in the 70S ribosome.

Functionally, located at the top of the head of the 30S subunit, it contacts several helices of the 16S rRNA. In the 70S ribosome it contacts the 23S rRNA (bridge B1a) and protein L5 of the 50S subunit (bridge B1b), connecting the 2 subunits; these bridges are implicated in subunit movement. Contacts the tRNAs in the A and P-sites. The sequence is that of Small ribosomal subunit protein uS13 from Nitrobacter winogradskyi (strain ATCC 25391 / DSM 10237 / CIP 104748 / NCIMB 11846 / Nb-255).